The following is a 210-amino-acid chain: Small ribosomal subunit protein eS8y (210 aa).

The tract at residues 1–22 is disordered; the sequence is MGISRDSIHKRRATGGKQKMWR. Residues 8–22 are compositionally biased toward basic residues; that stretch reads IHKRRATGGKQKMWR.

Belongs to the eukaryotic ribosomal protein eS8 family.

The sequence is that of Small ribosomal subunit protein eS8y (RPS8B) from Arabidopsis thaliana (Mouse-ear cress).